Consider the following 102-residue polypeptide: UPF0235 protein Noc_3000 (102 aa).

This sequence belongs to the UPF0235 family.

The chain is UPF0235 protein Noc_3000 from Nitrosococcus oceani (strain ATCC 19707 / BCRC 17464 / JCM 30415 / NCIMB 11848 / C-107).